The chain runs to 143 residues: Endoribonuclease YbeY (143 aa).

Positions 109, 113, and 119 each coordinate Zn(2+).

It belongs to the endoribonuclease YbeY family. Zn(2+) is required as a cofactor.

The protein resides in the cytoplasm. Its function is as follows. Single strand-specific metallo-endoribonuclease involved in late-stage 70S ribosome quality control and in maturation of the 3' terminus of the 16S rRNA. The polypeptide is Endoribonuclease YbeY (Leptospira borgpetersenii serovar Hardjo-bovis (strain JB197)).